A 154-amino-acid polypeptide reads, in one-letter code: Small heat shock protein C2 (154 aa).

Residues 43–154 (STEKNLIPRT…GKTRKIEVKG (112 aa)) form the sHSP domain.

It belongs to the small heat shock protein (HSP20) family.

This chain is Small heat shock protein C2 (hspC2), found in Rickettsia felis (strain ATCC VR-1525 / URRWXCal2) (Rickettsia azadi).